Here is a 156-residue protein sequence, read N- to C-terminus: MNLNATIFFQMLVFFVLGWFTMKFVWPPLTKAIDERRQKIADGLAAAEKGKADLAQAQARVSLIEASAKSETHARIIEAEKQAASVIEQARREAEAERARIVAQAAQDAAQEVQRAREALRDDVAALAVKGAEQILKREVDARAHAELLNQLKAQL.

The helical transmembrane segment at I7–P27 threads the bilayer.

Belongs to the ATPase B chain family. As to quaternary structure, F-type ATPases have 2 components, F(1) - the catalytic core - and F(0) - the membrane proton channel. F(1) has five subunits: alpha(3), beta(3), gamma(1), delta(1), epsilon(1). F(0) has three main subunits: a(1), b(2) and c(10-14). The alpha and beta chains form an alternating ring which encloses part of the gamma chain. F(1) is attached to F(0) by a central stalk formed by the gamma and epsilon chains, while a peripheral stalk is formed by the delta and b chains.

Its subcellular location is the cell inner membrane. In terms of biological role, f(1)F(0) ATP synthase produces ATP from ADP in the presence of a proton or sodium gradient. F-type ATPases consist of two structural domains, F(1) containing the extramembraneous catalytic core and F(0) containing the membrane proton channel, linked together by a central stalk and a peripheral stalk. During catalysis, ATP synthesis in the catalytic domain of F(1) is coupled via a rotary mechanism of the central stalk subunits to proton translocation. Functionally, component of the F(0) channel, it forms part of the peripheral stalk, linking F(1) to F(0). This is ATP synthase subunit b from Bordetella bronchiseptica (strain ATCC BAA-588 / NCTC 13252 / RB50) (Alcaligenes bronchisepticus).